Here is a 318-residue protein sequence, read N- to C-terminus: Trans-prenyltransferase (318 aa).

A helical transmembrane segment spans residues 1 to 21; that stretch reads MLHLIYISIIVVLIIILISYT. The isopentenyl diphosphate site is built by Lys-85, Arg-88, and His-122. Asp-129 and Asp-135 together coordinate Mg(2+). Arg-140 provides a ligand contact to dimethylallyl diphosphate. Position 141 (Arg-141) interacts with isopentenyl diphosphate. The dimethylallyl diphosphate site is built by Lys-216, Thr-217, and Gln-254.

Belongs to the FPP/GGPP synthase family. Asfivirus trans-prenyltransferase subfamily. The cofactor is Mg(2+).

The protein resides in the host endoplasmic reticulum. It is found in the host membrane. The enzyme catalyses isopentenyl diphosphate + dimethylallyl diphosphate = (2E)-geranyl diphosphate + diphosphate. It carries out the reaction isopentenyl diphosphate + (2E)-geranyl diphosphate = (2E,6E)-farnesyl diphosphate + diphosphate. The catalysed reaction is isopentenyl diphosphate + (2E,6E)-farnesyl diphosphate = (2E,6E,10E)-geranylgeranyl diphosphate + diphosphate. It catalyses the reaction isopentenyl diphosphate + (2E,6E,10E)-geranylgeranyl diphosphate = (2E,6E,10E,14E)-geranylfarnesyl diphosphate + diphosphate. Its pathway is isoprenoid biosynthesis; farnesyl diphosphate biosynthesis; farnesyl diphosphate from geranyl diphosphate and isopentenyl diphosphate: step 1/1. It participates in isoprenoid biosynthesis; geranyl diphosphate biosynthesis; geranyl diphosphate from dimethylallyl diphosphate and isopentenyl diphosphate: step 1/1. It functions in the pathway isoprenoid biosynthesis; geranylgeranyl diphosphate biosynthesis; geranylgeranyl diphosphate from farnesyl diphosphate and isopentenyl diphosphate: step 1/1. Its function is as follows. Trans-prenyltransferase that catalyzes the sequential condensation of isopentenyl diphosphate (IPP) with different allylic diphosphates, such as dimethylallyl diphosphate (DMAPP), geranyl diphosphate (GPP), farnesyl diphosphate (FPP) and geranylgeranyl diphosphate (GGPP), farnesyl diphosphate being the best allylic substrate. This African swine fever virus (isolate Warthog/Namibia/Wart80/1980) (ASFV) protein is Trans-prenyltransferase.